Here is a 197-residue protein sequence, read N- to C-terminus: MMFPQSRHSGSSHLPQQLKFTTSDSCDRIKDEFQLLQAQYHSLKLECDKLASEKSEMQRHYVMYYEMSYGLNIEMHKQAEIVKRLNGICAQVLPYLSQEHQQQVLGAIERAKQVTAPELNSIIRQQLQAHQLSQLQALALPLTPLPVGLQPPSLPAVSAGTGLLSLSALGSQAHLSKEDKNGHDGDTHQEDDGEKSD.

The CCN domain stretch occupies residues Leu-166–Asp-197. The segment at His-174 to Asp-197 is disordered. The span at Leu-175–Asp-197 shows a compositional bias: basic and acidic residues. At Ser-196 the chain carries Phosphoserine.

This sequence belongs to the WD repeat Groucho/TLE family. Homooligomer and heterooligomer with other family members. Binds TCF7. Binds the NF-kappa-B subunit RELA. Interacts with PHF12. Interacts (via Q domain) with SIX3. Interacts with SIX6. Post-translationally, ubiquitinated by XIAP/BIRC4. In terms of tissue distribution, found predominantly in muscle, heart and Placenta. In fetal tissues, abundantly expressed in the heart, lung, kidney, brain and liver.

It localises to the nucleus. In terms of biological role, transcriptional corepressor. Acts as a dominant repressor towards other family members. Inhibits NF-kappa-B-regulated gene expression. May be required for the initiation and maintenance of the differentiated state. Essential for the transcriptional repressor activity of SIX3 during retina and lens development. The polypeptide is TLE family member 5 (Homo sapiens (Human)).